The sequence spans 230 residues: Large ribosomal subunit protein uL1 (230 aa).

Belongs to the universal ribosomal protein uL1 family. As to quaternary structure, part of the 50S ribosomal subunit.

Its function is as follows. Binds directly to 23S rRNA. The L1 stalk is quite mobile in the ribosome, and is involved in E site tRNA release. Functionally, protein L1 is also a translational repressor protein, it controls the translation of the L11 operon by binding to its mRNA. This chain is Large ribosomal subunit protein uL1, found in Oenococcus oeni (strain ATCC BAA-331 / PSU-1).